Consider the following 227-residue polypeptide: MSQSPIELKGSNFTLSVVHLHNDQPEIILQALQEKVEQAPDFLKNAPVVINISALPADADLKALHHAIDSAGFRIVGMSGCRDEQQRRAVIKASLPLLSEGKKQKTSAKEDKPAEPAIKKTRVINLPVRSGQRIYAQGSDLIVTSNVSAGAELIADGNIHIYGMMRGRALAGASGDQECLVFCTHLNAELISIAGQYWLGDKIPTELAGKAAKLSLVNNELTIEPLI.

This sequence belongs to the MinC family. In terms of assembly, interacts with MinD and FtsZ.

Functionally, cell division inhibitor that blocks the formation of polar Z ring septums. Rapidly oscillates between the poles of the cell to destabilize FtsZ filaments that have formed before they mature into polar Z rings. Prevents FtsZ polymerization. The sequence is that of Probable septum site-determining protein MinC from Photorhabdus laumondii subsp. laumondii (strain DSM 15139 / CIP 105565 / TT01) (Photorhabdus luminescens subsp. laumondii).